The following is a 104-amino-acid chain: Integration host factor subunit alpha (104 aa).

This sequence belongs to the bacterial histone-like protein family. As to quaternary structure, heterodimer of an alpha and a beta chain.

Its function is as follows. This protein is one of the two subunits of integration host factor, a specific DNA-binding protein that functions in genetic recombination as well as in transcriptional and translational control. This chain is Integration host factor subunit alpha, found in Buchnera aphidicola subsp. Cinara cedri (strain Cc).